The primary structure comprises 162 residues: MKTVTARPLTAEAFAPYGSVADISELENLVSLADAYEGTGEAKTPVLQLVQAKAMSGSPVISQMEIHPFSSQTFLPLDQSSSLIVVCEAGEDGMPDESTIKAFLASPSQIVTYRHGVMHHRLTPLAPSGRFAMTMWQTGRGGDTVLYPLHTPVSVDISDITP.

Belongs to the ureidoglycolate lyase family. Homodimer. Requires Ni(2+) as cofactor.

It catalyses the reaction (S)-ureidoglycolate = urea + glyoxylate. It participates in nitrogen metabolism; (S)-allantoin degradation. Its function is as follows. Catalyzes the catabolism of the allantoin degradation intermediate (S)-ureidoglycolate, generating urea and glyoxylate. Involved in the utilization of allantoin as nitrogen source. The chain is Putative ureidoglycolate lyase from Agrobacterium fabrum (strain C58 / ATCC 33970) (Agrobacterium tumefaciens (strain C58)).